Reading from the N-terminus, the 139-residue chain is Small ribosomal subunit protein uS12 (139 aa).

The interval 1 to 21 is disordered; the sequence is MSTVSQLIKKRRSSKTSKTKA. The span at 8–18 shows a compositional bias: basic residues; the sequence is IKKRRSSKTSK.

The protein belongs to the universal ribosomal protein uS12 family. As to quaternary structure, part of the 30S ribosomal subunit. Contacts proteins S8 and S17. May interact with IF1 in the 30S initiation complex.

In terms of biological role, with S4 and S5 plays an important role in translational accuracy. Its function is as follows. Interacts with and stabilizes bases of the 16S rRNA that are involved in tRNA selection in the A site and with the mRNA backbone. Located at the interface of the 30S and 50S subunits, it traverses the body of the 30S subunit contacting proteins on the other side and probably holding the rRNA structure together. The combined cluster of proteins S8, S12 and S17 appears to hold together the shoulder and platform of the 30S subunit. This chain is Small ribosomal subunit protein uS12, found in Onion yellows phytoplasma (strain OY-M).